The primary structure comprises 33 residues: Gaegurin-3 (33 aa).

A disulfide bond links C27 and C33.

The protein belongs to the frog skin active peptide (FSAP) family. Brevinin subfamily. As to quaternary structure, monomer. As to expression, expressed by the skin glands.

It localises to the secreted. Has a non-hemolytic activity. Has a broad spectrum of activity against both Gram-positive and Gram-negative bacteria, fungi and protozoa. The sequence is that of Gaegurin-3 (GGN3) from Glandirana rugosa (Japanese wrinkled frog).